Reading from the N-terminus, the 1447-residue chain is Bud site selection protein 4 (1447 aa).

A compositionally biased stretch (basic and acidic residues) spans 1–16 (MHDAESTVDSLLKEID). Disordered regions lie at residues 1-38 (MHDAESTVDSLLKEIDNEMEQTKSNITQNGSEDTPHNW) and 57-76 (NTRSNATENSRGRSPSKMST). Residue serine 10 is modified to Phosphoserine. Composition is skewed to polar residues over residues 22–32 (TKSNITQNGSE) and 59–76 (RSNATENSRGRSPSKMST). 5 positions are modified to phosphoserine: serine 78, serine 81, serine 91, serine 96, and serine 167. A disordered region spans residues 272–316 (NLPSKLLNTSNNSHSDSRSPTASVEDLNISTNLPGADSSQNNPVT). Over residues 277–316 (LLNTSNNSHSDSRSPTASVEDLNISTNLPGADSSQNNPVT) the composition is skewed to polar residues. Threonine 365 is modified (phosphothreonine). Serine 367 is modified (phosphoserine). The disordered stretch occupies residues 444 to 479 (HQESEHANEQPAIIPQKDSSEETFTELNNESEFQRN). Serine 511 is modified (phosphoserine). A disordered region spans residues 529–591 (KTSAEEHDLS…NEEPEHVPLL (63 aa)). Residues 538–548 (SSSCEDQSVSE) show a composition bias toward polar residues. Residues 549-580 (ARNKDRIEEKEVETKDENIETEKDESEYHKVE) are compositionally biased toward basic and acidic residues. At serine 616 the chain carries Phosphoserine. The span at 648-664 (ANSQFSQQSSITTASTV) shows a compositional bias: polar residues. Residues 648 to 673 (ANSQFSQQSSITTASTVDSKKDNGST) form a disordered region. An interaction with IQG1 region spans residues 768–879 (EHENIPLSTH…SLWESSYELK (112 aa)). Residues serine 805 and serine 811 each carry the phosphoserine modification. Positions 1302–1413 (NIYKEGYLLQ…WYNKLQEVVE (112 aa)) constitute a PH domain.

As to quaternary structure, interacts with AXL1, AXL2, IQG1 and SEC3. In terms of processing, phosphorylated by CDC28.

It is found in the bud neck. Required for establishment of the axial budding pattern in haploid cells. Cooperates with other bud site selection proteins to recognize a spatial landmark during mitosis and they subsequently become a landmark for downstream polarity establishment factors that coordinate axial budding and cytokinesis. Involved in the septin organization at the bud neck. The polypeptide is Bud site selection protein 4 (BUD4) (Saccharomyces cerevisiae (strain ATCC 204508 / S288c) (Baker's yeast)).